Here is a 315-residue protein sequence, read N- to C-terminus: Borealin (315 aa).

Disordered stretches follow at residues Ile-103–Gly-126 and Leu-138–Met-226. Thr-146 carries the phosphothreonine modification. Ser-152 carries the post-translational modification Phosphoserine. Over residues Ala-153–Arg-162 the composition is skewed to basic residues. Ser-163 is subject to Phosphoserine. Residues Ser-178–Asn-188 are compositionally biased toward low complexity. Position 205 is a phosphoserine (Ser-205). A Phosphothreonine modification is found at Thr-209. Phosphoserine is present on residues Ser-218, Ser-220, and Ser-244.

The protein belongs to the borealin family. As to quaternary structure, component of the CPC complex. In terms of tissue distribution, ubiquitously expressed in the early embryo. Expression is restricted to the ventral nerve cord and brain during later embryonic stages.

It is found in the nucleus. The protein resides in the chromosome. The protein localises to the centromere. Its subcellular location is the cytoplasm. It localises to the cytoskeleton. It is found in the spindle. In terms of biological role, component of the chromosomal passenger complex (CPC), a complex that acts as a key regulator of embryonic mitosis. The CPC complex has essential functions at the centromere for ensuring sister chromatid cohesion, recruitment of the CPC to kinetochores, and chromosome alignment and segregation. There is no function in meiotic histone phosphorylation or spindle formation. The sequence is that of Borealin (borr) from Drosophila melanogaster (Fruit fly).